The following is a 326-amino-acid chain: Beta-ketoacyl-[acyl-carrier-protein] synthase III (326 aa).

Catalysis depends on residues C112 and H251. The interval 252–256 is ACP-binding; the sequence is QANSR. Residue N281 is part of the active site.

Belongs to the thiolase-like superfamily. FabH family. Homodimer.

The protein localises to the cytoplasm. It catalyses the reaction malonyl-[ACP] + acetyl-CoA + H(+) = 3-oxobutanoyl-[ACP] + CO2 + CoA. It functions in the pathway lipid metabolism; fatty acid biosynthesis. Functionally, catalyzes the condensation reaction of fatty acid synthesis by the addition to an acyl acceptor of two carbons from malonyl-ACP. Catalyzes the first condensation reaction which initiates fatty acid synthesis and may therefore play a role in governing the total rate of fatty acid production. Possesses both acetoacetyl-ACP synthase and acetyl transacylase activities. Its substrate specificity determines the biosynthesis of branched-chain and/or straight-chain of fatty acids. This chain is Beta-ketoacyl-[acyl-carrier-protein] synthase III, found in Clostridium botulinum (strain Loch Maree / Type A3).